The primary structure comprises 47 residues: Large ribosomal subunit protein bL27c-2 (47 aa).

Belongs to the bacterial ribosomal protein bL27 family.

The protein resides in the plastid. The protein localises to the chloroplast. The sequence is that of Large ribosomal subunit protein bL27c-2 from Cyanidium caldarium (Red alga).